The primary structure comprises 96 residues: C-C motif chemokine 20 (96 aa).

A signal peptide spans 1–26 (MMCSSKNLLLAALMSVLLLHFCSKSE). 2 cysteine pairs are disulfide-bonded: cysteine 32-cysteine 58 and cysteine 33-cysteine 74.

Belongs to the intercrine beta (chemokine CC) family.

It is found in the secreted. Its function is as follows. Acts as a ligand for C-C chemokine receptor CCR6. Signals through binding and activation of CCR6 and induces a strong chemotactic response and mobilization of intracellular calcium ions. The ligand-receptor pair CCL20-CCR6 is responsible for the chemotaxis of dendritic cells (DC), effector/memory T-cells and B-cells and plays an important role at skin and mucosal surfaces under homeostatic and inflammatory conditions, as well as in pathology, including cancer and autoimmune diseases. CCL20 acts as a chemotactic factor that attracts lymphocytes and, slightly, neutrophils, but not monocytes. Involved in the recruitment of both the pro-inflammatory IL17 producing helper T-cells (Th17) and the regulatory T-cells (Treg) to sites of inflammation. Required for optimal migration of thymic natural regulatory T cells (nTregs) and DN1 early thymocyte progenitor cells. Positively regulates sperm motility and chemotaxis via its binding to CCR6 which triggers Ca2+ mobilization in the sperm which is important for its motility. May be involved in formation and function of the mucosal lymphoid tissues by attracting lymphocytes and dendritic cells towards epithelial cells. The polypeptide is C-C motif chemokine 20 (CCL20) (Bos taurus (Bovine)).